The chain runs to 221 residues: Oxaloacetate tautomerase FAHD1, mitochondrial (221 aa).

The transit peptide at 1–24 directs the protein to the mitochondrion; that stretch reads MAASRPLSRFWEWGKNIVCVGRNY. Position 37 is a phosphoserine (Ser37). Positions 68, 70, and 99 each coordinate Mg(2+). The residue at position 110 (Lys110) is an N6-acetyllysine. Lys112 carries the N6-succinyllysine modification.

The protein belongs to the FAH family. Homodimer. Requires Mg(2+) as cofactor. Mn(2+) serves as cofactor.

It is found in the mitochondrion. It localises to the cytoplasm. The protein localises to the cytosol. It catalyses the reaction oxaloacetate = enol-oxaloacetate. The catalysed reaction is oxaloacetate + H(+) = pyruvate + CO2. The enzyme catalyses a 3-acylpyruvate + H2O = a carboxylate + pyruvate + H(+). It carries out the reaction acetylpyruvate + H2O = acetate + pyruvate + H(+). It catalyses the reaction 3-fumarylpyruvate + H2O = fumarate + pyruvate + H(+). With respect to regulation, oxaloacetate decarboxylation is competitively inhibited by oxalate. Functionally, tautomerase that converts enol-oxaloacetate, a strong inhibitor of succinate dehydrogenase, to the physiological keto form of oxaloacetate. It is thereby required to maximize aerobic respiration efficiency by preventing succinate dehydrogenase inhibition. Also acts as a weak oxaloacetate decarboxylase (ODx), catalyzing the decarboxylation of oxaloacetate (OAA) to pyruvate and CO(2), and as such is likely a regulatory enzyme in the TCA cycle. Also displays acylpyruvase activity, being able to hydrolyze acetylpyruvate and fumarylpyruvate in vitro. This Pongo abelii (Sumatran orangutan) protein is Oxaloacetate tautomerase FAHD1, mitochondrial (FAHD1).